Reading from the N-terminus, the 244-residue chain is Uridylate kinase (244 aa).

17–20 (KLSG) lines the ATP pocket. Residue Gly59 coordinates UMP. Residues Gly60 and Arg64 each contribute to the ATP site. Residues Asp79 and 140 to 147 (TGNPFFTT) contribute to the UMP site. Thr167, Tyr173, and Asp176 together coordinate ATP.

Belongs to the UMP kinase family. As to quaternary structure, homohexamer.

It localises to the cytoplasm. It catalyses the reaction UMP + ATP = UDP + ADP. The protein operates within pyrimidine metabolism; CTP biosynthesis via de novo pathway; UDP from UMP (UMPK route): step 1/1. Inhibited by UTP. Catalyzes the reversible phosphorylation of UMP to UDP. The polypeptide is Uridylate kinase (Hahella chejuensis (strain KCTC 2396)).